The sequence spans 373 residues: MSNSPKPLADTDTQSWWTKGSTSASLLGIVIFAASFTSDRFIANSLLSLPLMISTLISVLIASWGIPKLRALKMGQVIREDGPQTHQRKSGTPTMGGLLVVPVGLIIGSFVSVNGESSEQLLALSWITLAYMLIGGFDDWRSLTRGTNTGLTPRGKLLLQTAASLIFLAWAGWQHWIDSSIALPLGISIQMGFMIWPLALFVFLAESNATNLTDGLDGLASGCGALVFTGLAVQLMLRGNDGNPVLAGFCMAMAGAWLGFLMHNRNPAQVFMGDTGSLAMGAALSGVAILSNSLWPLLVMGGVFLAESLSVIIQVWVFKATKGPDGVGRRVFRMAPLHHHYEIGGTDEQMVVRRFWLSTGGLVLLGLLLRPTA.

The next 11 membrane-spanning stretches (helical) occupy residues 16–36, 46–66, 93–113, 120–140, 157–177, 185–205, 216–236, 242–262, 270–290, 298–318, and 350–369; these read WWTK…AASF, LLSL…SWGI, PTMG…FVSV, QLLA…FDDW, LLLQ…QHWI, LGIS…VFLA, LDGL…VQLM, GNPV…GFLM, VFMG…VAIL, LVMG…VWVF, and MVVR…GLLL.

Belongs to the glycosyltransferase 4 family. MraY subfamily. It depends on Mg(2+) as a cofactor.

Its subcellular location is the cell inner membrane. The catalysed reaction is UDP-N-acetyl-alpha-D-muramoyl-L-alanyl-gamma-D-glutamyl-meso-2,6-diaminopimeloyl-D-alanyl-D-alanine + di-trans,octa-cis-undecaprenyl phosphate = di-trans,octa-cis-undecaprenyl diphospho-N-acetyl-alpha-D-muramoyl-L-alanyl-D-glutamyl-meso-2,6-diaminopimeloyl-D-alanyl-D-alanine + UMP. The protein operates within cell wall biogenesis; peptidoglycan biosynthesis. Its function is as follows. Catalyzes the initial step of the lipid cycle reactions in the biosynthesis of the cell wall peptidoglycan: transfers peptidoglycan precursor phospho-MurNAc-pentapeptide from UDP-MurNAc-pentapeptide onto the lipid carrier undecaprenyl phosphate, yielding undecaprenyl-pyrophosphoryl-MurNAc-pentapeptide, known as lipid I. The polypeptide is Phospho-N-acetylmuramoyl-pentapeptide-transferase (Prochlorococcus marinus (strain MIT 9313)).